A 362-amino-acid polypeptide reads, in one-letter code: Cobalt-precorrin-5B C(1)-methyltransferase (362 aa).

The protein belongs to the CbiD family.

The enzyme catalyses Co-precorrin-5B + S-adenosyl-L-methionine = Co-precorrin-6A + S-adenosyl-L-homocysteine. It participates in cofactor biosynthesis; adenosylcobalamin biosynthesis; cob(II)yrinate a,c-diamide from sirohydrochlorin (anaerobic route): step 6/10. In terms of biological role, catalyzes the methylation of C-1 in cobalt-precorrin-5B to form cobalt-precorrin-6A. This Burkholderia thailandensis (strain ATCC 700388 / DSM 13276 / CCUG 48851 / CIP 106301 / E264) protein is Cobalt-precorrin-5B C(1)-methyltransferase.